Consider the following 487-residue polypeptide: DNA ligase (487 aa).

The N6-AMP-lysine intermediate role is filled by lysine 159. ATP contacts are provided by arginine 164, arginine 182, and glutamate 217. Glutamate 217 is an a divalent metal cation binding site. Residues 229–237 (EGLDFLFDA) form an interaction with the sliding clamp region. Glutamate 344 provides a ligand contact to a divalent metal cation. ATP contacts are provided by arginine 359 and lysine 365.

Belongs to the ATP-dependent DNA ligase family. In terms of assembly, interacts with the sliding clamp. A divalent metal cation serves as cofactor.

The catalysed reaction is ATP + (deoxyribonucleotide)n-3'-hydroxyl + 5'-phospho-(deoxyribonucleotide)m = (deoxyribonucleotide)n+m + AMP + diphosphate.. Its function is as follows. DNA ligase, which is expressed in the early stage of lytic development, has been implicated in T4 DNA synthesis and genetic recombination. It may also play a role in T4 DNA repair. The chain is DNA ligase (30) from Escherichia coli (Bacteriophage T6).